A 366-amino-acid polypeptide reads, in one-letter code: Histidinol-phosphate aminotransferase (366 aa).

An N6-(pyridoxal phosphate)lysine modification is found at lysine 222.

It belongs to the class-II pyridoxal-phosphate-dependent aminotransferase family. Histidinol-phosphate aminotransferase subfamily. Homodimer. The cofactor is pyridoxal 5'-phosphate.

It carries out the reaction L-histidinol phosphate + 2-oxoglutarate = 3-(imidazol-4-yl)-2-oxopropyl phosphate + L-glutamate. Its pathway is amino-acid biosynthesis; L-histidine biosynthesis; L-histidine from 5-phospho-alpha-D-ribose 1-diphosphate: step 7/9. The chain is Histidinol-phosphate aminotransferase from Lysinibacillus sphaericus (strain C3-41).